The sequence spans 784 residues: Endonuclease MutS2 (784 aa).

ATP is bound at residue Gly335–Thr342. Residues Glu527–Glu546 are disordered. One can recognise a Smr domain in the interval Leu709–Lys784.

It belongs to the DNA mismatch repair MutS family. MutS2 subfamily. As to quaternary structure, homodimer. Binds to stalled ribosomes, contacting rRNA.

Functionally, endonuclease that is involved in the suppression of homologous recombination and thus may have a key role in the control of bacterial genetic diversity. Its function is as follows. Acts as a ribosome collision sensor, splitting the ribosome into its 2 subunits. Detects stalled/collided 70S ribosomes which it binds and splits by an ATP-hydrolysis driven conformational change. Acts upstream of the ribosome quality control system (RQC), a ribosome-associated complex that mediates the extraction of incompletely synthesized nascent chains from stalled ribosomes and their subsequent degradation. Probably generates substrates for RQC. The polypeptide is Endonuclease MutS2 (Geobacillus thermodenitrificans (strain NG80-2)).